Consider the following 115-residue polypeptide: Probable mycobacterial cidal antitoxin Rv3188 (115 aa).

It belongs to the MbcA/ParS/Xre antitoxin family. As to quaternary structure, forms a heterotetramer with cognate toxin Rv3189.

Probable antitoxin component of a type II toxin-antitoxin (TA) system. Neutralizes the activity of cognate toxin Rv3189 by blocking access to the toxin active site. The chain is Probable mycobacterial cidal antitoxin Rv3188 from Mycobacterium tuberculosis (strain ATCC 25618 / H37Rv).